The chain runs to 169 residues: MPLLDSFTVDHTRMNAPAVRVAKTMKSPSGDTITVFDLRFCAPNKDILSERGIHTLEHLYAGFMRNHLNGDNVEIIDISPMGCRTGFYMSLIGSPKEADVAEAWLASMNDVLTVASQSEIPELNEYQCGTFNMHSLEQAQGIARSIIASGISVNKNDELKLSEKILKGL.

Fe cation contacts are provided by His54, His58, and Cys128.

It belongs to the LuxS family. As to quaternary structure, homodimer. Requires Fe cation as cofactor.

The catalysed reaction is S-(5-deoxy-D-ribos-5-yl)-L-homocysteine = (S)-4,5-dihydroxypentane-2,3-dione + L-homocysteine. Its function is as follows. Involved in the synthesis of autoinducer 2 (AI-2) which is secreted by bacteria and is used to communicate both the cell density and the metabolic potential of the environment. The regulation of gene expression in response to changes in cell density is called quorum sensing. Catalyzes the transformation of S-ribosylhomocysteine (RHC) to homocysteine (HC) and 4,5-dihydroxy-2,3-pentadione (DPD). In Shewanella woodyi (strain ATCC 51908 / MS32), this protein is S-ribosylhomocysteine lyase.